A 726-amino-acid chain; its full sequence is Catalase-peroxidase (726 aa).

The segment at residues 96 to 224 (WHSAGTYRIA…LAAVMMGLIY (129 aa)) is a cross-link (tryptophyl-tyrosyl-methioninium (Trp-Tyr) (with M-250)). Catalysis depends on histidine 97, which acts as the Proton acceptor. Residues 224-250 (YVNPEGVDGKPDPLKTAHDMRVTFARM) constitute a cross-link (tryptophyl-tyrosyl-methioninium (Tyr-Met) (with W-96)). Histidine 265 contributes to the heme b binding site.

Belongs to the peroxidase family. Peroxidase/catalase subfamily. As to quaternary structure, homodimer or homotetramer. It depends on heme b as a cofactor. Post-translationally, formation of the three residue Trp-Tyr-Met cross-link is important for the catalase, but not the peroxidase activity of the enzyme.

It carries out the reaction H2O2 + AH2 = A + 2 H2O. It catalyses the reaction 2 H2O2 = O2 + 2 H2O. In terms of biological role, bifunctional enzyme with both catalase and broad-spectrum peroxidase activity. This is Catalase-peroxidase from Vibrio campbellii (strain ATCC BAA-1116).